Consider the following 119-residue polypeptide: Protein TusC (119 aa).

The protein belongs to the DsrF/TusC family. As to quaternary structure, heterohexamer, formed by a dimer of trimers. The hexameric TusBCD complex contains 2 copies each of TusB, TusC and TusD. The TusBCD complex interacts with TusE.

The protein localises to the cytoplasm. Functionally, part of a sulfur-relay system required for 2-thiolation of 5-methylaminomethyl-2-thiouridine (mnm(5)s(2)U) at tRNA wobble positions. This Escherichia coli O45:K1 (strain S88 / ExPEC) protein is Protein TusC.